The sequence spans 320 residues: Very-long-chain 3-oxoacyl-CoA reductase (320 aa).

A helical transmembrane segment spans residues 17–37; the sequence is FWYLGVVAAVWWGLRAAWCLL. 56–85 is a binding site for NADP(+); sequence GKWAVVTGATDGIGKAYAEELAKRGMNIVL. 2 helical membrane-spanning segments follow: residues 189 to 209 and 283 to 303; these read GVILNISSASGMYPVPLLTVY and AIMGWISTSLVPVSTAISLGM. Position 196 (Ser196) interacts with substrate. Catalysis depends on Tyr209, which acts as the Proton acceptor.

It belongs to the short-chain dehydrogenases/reductases (SDR) family. 17-beta-HSD 3 subfamily.

Its subcellular location is the endoplasmic reticulum membrane. The catalysed reaction is a very-long-chain (3R)-3-hydroxyacyl-CoA + NADP(+) = a very-long-chain 3-oxoacyl-CoA + NADPH + H(+). It catalyses the reaction 17beta-estradiol + NAD(+) = estrone + NADH + H(+). The enzyme catalyses 17beta-estradiol + NADP(+) = estrone + NADPH + H(+). It carries out the reaction 3-oxooctadecanoyl-CoA + NADPH + H(+) = (3R)-hydroxyoctadecanoyl-CoA + NADP(+). The catalysed reaction is (7Z,10Z,13Z,16Z)-3-oxodocosatetraenoyl-CoA + NADPH + H(+) = (3R)-hydroxy-(7Z,10Z,13Z,16Z)-docosatetraenoyl-CoA + NADP(+). It catalyses the reaction 3-oxo-(7Z,10Z,13Z,16Z,19Z)-docosapentaenoyl-CoA + NADPH + H(+) = (3R)-hydroxy-(7Z,10Z,13Z,16Z,19Z)-docosapentaenoyl-CoA + NADP(+). The enzyme catalyses (8Z,11Z,14Z)-3-oxoeicosatrienoyl-CoA + NADPH + H(+) = (3R)-hydroxy-(8Z,11Z,14Z)-eicosatrienoyl-CoA + NADP(+). It functions in the pathway lipid metabolism; fatty acid biosynthesis. It participates in steroid biosynthesis; estrogen biosynthesis. In terms of biological role, catalyzes the second of the four reactions of the long-chain fatty acids elongation cycle. This endoplasmic reticulum-bound enzymatic process, allows the addition of two carbons to the chain of long- and very long-chain fatty acids/VLCFAs per cycle. This enzyme has a 3-ketoacyl-CoA reductase activity, reducing 3-ketoacyl-CoA to 3-hydroxyacyl-CoA, within each cycle of fatty acid elongation. Thereby, it may participate in the production of VLCFAs of different chain lengths that are involved in multiple biological processes as precursors of membrane lipids and lipid mediators. May also catalyze the transformation of estrone (E1) into estradiol (E2) and play a role in estrogen formation. The sequence is that of Very-long-chain 3-oxoacyl-CoA reductase (hsd17b12) from Xenopus tropicalis (Western clawed frog).